A 198-amino-acid polypeptide reads, in one-letter code: DnaJ homolog subfamily C member 5 (198 aa).

Phosphoserine is present on residues S8, S10, S12, and S15. The region spanning 13-82 (GESLYHVLGL…RNIYDKYGSL (70 aa)) is the J domain. Position 17 is a phosphotyrosine (Y17). K56 bears the N6-acetyllysine mark. S151 is subject to Phosphoserine.

Homodimer. Interacts with the chaperone complex consisting of HSC70 and SGTA. Interacts with ZDHHC13 (via ANK repeats). Interacts with ZDHHC17 (via ANK repeats). Interacts with SYT1, SYT5 and SYT7, and with SYT9, forming a complex with SNAP25. The interaction with SYT9 is stimulated tenfold in presence of calcium. Formation of the chaperone complex DNAJC5/HSC70 is not regulated by phosphorylation. Ser-10 phosphorylation induces an order-to-disorder transition triggering the interaction with Lys-58. This conformational switch modulates DNAJC5's cellular functions by reducing binding to syntaxin and synaptogamin without altering HSC70 interactions. In terms of processing, palmitoylated. Could be palmitoylated by DHHC3, DHHC7, DHHC15 and DHHC17. Palmitoylation occurs probably in the cysteine-rich domain and regulates DNAJC5 membrane attachment.

It localises to the cytoplasm. The protein resides in the cytosol. Its subcellular location is the membrane. The protein localises to the cytoplasmic vesicle. It is found in the secretory vesicle. It localises to the chromaffin granule membrane. The protein resides in the melanosome. Its subcellular location is the cell membrane. Its function is as follows. Acts as a co-chaperone for the SNARE protein SNAP-25. Involved in the calcium-mediated control of a late stage of exocytosis. Acts as a general chaperone in regulated exocytosis. May have an important role in presynaptic function. May be involved in calcium-dependent neurotransmitter release at nerve endings. This is DnaJ homolog subfamily C member 5 from Mus musculus (Mouse).